The primary structure comprises 197 residues: MSARAPKELRLALPPCLLNRTFASPNASGSGNTGARGPGAGGSGTCITQVGQQLFQSFSSTLVLIVLVTLIFCLIVLSLSTFHIHKRRMKKRKMQRAQEEYERDHCSGSRGGGGLPRPGRQAPTHTKETRLERQPRDSPFCAPSNASSSSSSSPGLLCQGPCAPPPPPPASSPQGAHAASSCLDTAGEGLLQTVVLS.

The N-terminal stretch at 1–23 (MSARAPKELRLALPPCLLNRTFA) is a signal peptide. Residues Asn-19 and Asn-26 are each glycosylated (N-linked (GlcNAc...) asparagine). Topologically, residues 24-61 (SPNASGSGNTGARGPGAGGSGTCITQVGQQLFQSFSST) are extracellular. A helical membrane pass occupies residues 62–82 (LVLIVLVTLIFCLIVLSLSTF). Topologically, residues 83–197 (HIHKRRMKKR…EGLLQTVVLS (115 aa)) are cytoplasmic. The interval 94-180 (MQRAQEEYER…SSPQGAHAAS (87 aa)) is disordered. 2 stretches are compositionally biased toward basic and acidic residues: residues 96 to 107 (RAQEEYERDHCS) and 125 to 136 (HTKETRLERQPR). Residues 147-161 (SSSSSSSPGLLCQGP) are compositionally biased toward low complexity. Residues 162–171 (CAPPPPPPAS) show a composition bias toward pro residues.

The protein resides in the membrane. This is an uncharacterized protein from Macaca fascicularis (Crab-eating macaque).